Reading from the N-terminus, the 875-residue chain is Phospholipase DDHD1 (875 aa).

Disordered regions lie at residues 1–30, 101–153, and 206–231; these read MNYPGHGSPRSSERNGGRGGDGAAWELGSD, LRYY…GAAA, and RAQDPDGDHVCGPASPAGPASSSVED. Phosphoserine is present on residues S8 and S11. A compositionally biased stretch (gly residues) spans 130-140; it reads SGGGGAAGGGP. Over residues 217–228 the composition is skewed to low complexity; that stretch reads GPASPAGPASSS. Residue S540 is part of the active site. Residues 614–861 form the DDHD domain; it reads LKFKVENFFC…ALFLLTFMYK (248 aa). Residue S726 is modified to Phosphoserine. The tract at residues 770 to 804 is disordered; the sequence is RSSASQPSETSRDSIEDEKKPVASPPMTTVATQTL. A compositionally biased stretch (basic and acidic residues) spans 779 to 790; the sequence is TSRDSIEDEKKP. A compositionally biased stretch (polar residues) spans 795 to 804; that stretch reads PMTTVATQTL.

The protein belongs to the PA-PLA1 family. In terms of assembly, forms homooligomers and, to a much smaller extent, heterooligomers with DDHD2. Interacts with SEC23A and SEC24C. In terms of tissue distribution, expressed in mature testis.

It is found in the cytoplasm. The catalysed reaction is a 1,2-diacyl-sn-glycero-3-phosphate + H2O = a 2-acyl-sn-glycerol 3-phosphate + a fatty acid + H(+). It carries out the reaction a 1,2-diacyl-sn-glycero-3-phospho-(1D-myo-inositol) + H2O = a 2-acyl-sn-glycero-3-phospho-D-myo-inositol + a fatty acid + H(+). The enzyme catalyses 1-octadecanoyl-2-(5Z,8Z,11Z,14Z-eicosatetraenoyl)-sn-glycero-3-phospho-(1D-myo-inositol) + H2O = 2-(5Z,8Z,11Z,14Z-eicosatetraenoyl)-sn-glycero-3-phospho-(1D-myo-inositol) + octadecanoate + H(+). It catalyses the reaction a 1-acyl-2-(5Z,8Z,11Z,14Z-eicosatetraenoyl)-sn-glycero-3-phospho-(1D-myo-inositol) + H2O = 2-(5Z,8Z,11Z,14Z-eicosatetraenoyl)-sn-glycero-3-phospho-(1D-myo-inositol) + a fatty acid + H(+). The catalysed reaction is 1,2-dihexadecanoyl-sn-glycero-3-phospho-(1D-myo-inositol) + H2O = 2-hexadecanoyl-sn-glycero-3-phospho-(1D-myo-inositol) + hexadecanoate + H(+). It carries out the reaction 1,2-di-(9Z-octadecenoyl)-sn-glycero-3-phosphate + H2O = 2-(9Z-octadecenoyl)-sn-glycero-3-phosphate + (9Z)-octadecenoate + H(+). The enzyme catalyses a 1-acyl-2-(5Z,8Z,11Z,14Z)-eicosatetraenoyl-sn-glycero-3-phosphate + H2O = 2-(5Z,8Z,11Z,14Z-eicosatetraenoyl)-sn-glycero-3-phosphate + a fatty acid + H(+). It catalyses the reaction 1-hexadecanoyl-2-(9Z-octadecenoyl)-sn-glycero-3-phosphate + H2O = 2-(9Z-octadecenoyl)-sn-glycero-3-phosphate + hexadecanoate + H(+). The catalysed reaction is 1-hexadecanoyl-2-(9Z-octadecenoyl)-sn-glycero-3-phospho-L-serine + H2O = 2-(9Z-octadecenoyl)-sn-glycero-3-phospho-L-serine + hexadecanoate + H(+). It carries out the reaction 1,2-di-(5Z,8Z,11Z,14Z)-eicosatetraenoyl-sn-glycero-3-phosphate + H2O = 2-(5Z,8Z,11Z,14Z-eicosatetraenoyl)-sn-glycero-3-phosphate + (5Z,8Z,11Z,14Z)-eicosatetraenoate + H(+). The enzyme catalyses 1-octadecanoyl-2-(5Z,8Z,11Z,14Z-eicosatetraenoyl)-sn-glycero-3-phosphate + H2O = 2-(5Z,8Z,11Z,14Z-eicosatetraenoyl)-sn-glycero-3-phosphate + octadecanoate + H(+). It catalyses the reaction a 1,2-diacyl-sn-glycero-3-phosphocholine + H2O = a 2-acyl-sn-glycero-3-phosphocholine + a fatty acid + H(+). The catalysed reaction is a 1,2-diacyl-sn-glycero-3-phosphoethanolamine + H2O = a 2-acyl-sn-glycero-3-phosphoethanolamine + a fatty acid + H(+). It carries out the reaction a 1,2-diacyl-sn-glycero-3-phospho-L-serine + H2O = a 2-acyl-sn-glycero-3-phospho-L-serine + a fatty acid + H(+). The enzyme catalyses a 1,2-diacyl-sn-glycero-3-phospho-(1'-sn-glycerol) + H2O = 2-acyl-sn-glycero-3-phospho-(1'-sn-glycerol) + a fatty acid + H(+). It catalyses the reaction 1-hexadecanoyl-2-(9Z-octadecenoyl)-sn-glycero-3-phospho-(1'-sn-glycerol) + H2O = 2-(9Z-octadecenoyl)-sn-glycero-3-phospho-(1'-sn-glycerol) + hexadecanoate + H(+). The catalysed reaction is 1-acyl-2-(5Z,8Z,11Z,14Z-eicosatetraenoyl)-sn-glycero-3-phosphocholine + H2O = 2-(5Z,8Z,11Z,14Z)-eicosatetraenoyl-sn-glycero-3-phosphocholine + a fatty acid + H(+). It carries out the reaction 1-acyl-2-(5Z,8Z,11Z,14Z)-eicosatetraenoyl-sn-glycero-3-phosphoethanolamine + H2O = 2-(5Z,8Z,11Z,14Z)-eicosatetraenoyl-sn-glycero-3-phosphoethanolamine + a fatty acid + H(+). The enzyme catalyses 1-(9Z-octadecenoyl)-2-(7Z,10Z,13Z,16Z,19Z-docosapentaenoyl)-sn-glycero-3-phospho-1D-myo-inositol + H2O = 2-(7Z,10Z,13Z,16Z,19Z-docosapentaenoyl)-sn-glycero-3-phospho-1D-myo-inositol + (9Z)-octadecenoate + H(+). It catalyses the reaction 1-(9Z-octadecenoyl)-2-(5Z,8Z,11Z,14Z-eicosatetraenoyl)-sn-glycero-3-phospho-1D-myo-inositol + H2O = 2-(5Z,8Z,11Z,14Z-eicosatetraenoyl)-sn-glycero-3-phospho-(1D-myo-inositol) + (9Z)-octadecenoate + H(+). The catalysed reaction is 1,2-di-(9Z-octadecenoyl)-sn-glycero-3-phospho-1D-myo-inositol + H2O = 2-(9Z-octadecenoyl)-sn-glycero-3-phospho-1D-myo-inositol + (9Z)-octadecenoate + H(+). It carries out the reaction 1-(9Z-octadecenoyl)-2-(8Z,11Z,14Z-eicosatrienoyl)-sn-glycero-3-phospho-1D-myo-inositol + H2O = 2-(8Z,11Z,14Z-eicosatrienoyl)-sn-glycero-3-phospho-1D-myo-inositol + (9Z)-octadecenoate + H(+). The enzyme catalyses 1,2-di-(9Z-octadecenoyl)-sn-glycero-3-phosphocholine + H2O = (9Z-octadecenoyl)-sn-glycero-3-phosphocholine + (9Z)-octadecenoate + H(+). It functions in the pathway phospholipid metabolism; phosphatidylinositol metabolism. Functionally, phospholipase A1 (PLA1) that hydrolyzes ester bonds at the sn-1 position of glycerophospholipids producing a free fatty acid and a lysophospholipid. Prefers phosphatidate (1,2-diacyl-sn-glycero-3-phosphate, PA) as substrate in vitro, but can efficiently hydrolyze phosphatidylinositol (1,2-diacyl-sn-glycero-3-phospho-(1D-myo-inositol), PI), as well as a range of other glycerophospholipid substrates such as phosphatidylcholine (1,2-diacyl-sn-glycero-3-phosphocholine, PC), phosphatidylethanolamine (1,2-diacyl-sn-glycero-3-phosphoethanolamine, PE), phosphatidylserine (1,2-diacyl-sn-glycero-3-phospho-L-serine, PS) and phosphatidylglycerol (1,2-diacyl-sn-glycero-3-phospho-(1'-sn-glycerol), PG). Involved in the regulation of the endogenous content of polyunsaturated PI and PS lipids in the nervous system. Changes in these lipids extend to downstream metabolic products like PI phosphates PIP and PIP2, which play fundamental roles in cell biology. Regulates mitochondrial morphology. These dynamic changes may be due to PA hydrolysis at the mitochondrial surface. May play a regulatory role in spermatogenesis or sperm function. This chain is Phospholipase DDHD1 (DDHD1), found in Bos taurus (Bovine).